A 338-amino-acid polypeptide reads, in one-letter code: MELRRGGVGSQAAGRRMDGDCRDGGCGSKDAGSEDYENLPTSASVSTHMTAGAMAGILEHSIMYPVDSVKTRMQSLNPDPKARYTSIYGALKRIMHTEGFWRPLRGLNVMMMGAGPAHAMYFACYENMKRTLNDVFSHQGNSHLANGIAGSMATLLHDAVMNPAEVVKQRLQMYNSQHQSALSCIRTVWRTEGLGAFYRSYTTQLTMNIPFQSIHFITYEFLQEQVNPRRDYNPQSHIISGGLAGALAAAATTPLDVCKTLLNTQENMALSLANVSGRLSGMANAFRTVYQLNGLAGYFKGIQARVIYQMPSTAISWSVYEFFKYFLTKRQLENRTLY.

The interval 1-37 (MELRRGGVGSQAAGRRMDGDCRDGGCGSKDAGSEDYE) is disordered. 3 Solcar repeats span residues 43-131 (ASVS…MKRT), 141-225 (NSHL…LQEQ), and 232-326 (YNPQ…FKYF). 6 helical membrane passes run 45–64 (VSTH…SIMY), 106–125 (GLNV…FACY), 143–162 (HLAN…AVMN), 200–219 (SYTT…FITY), 234–253 (PQSH…AATT), and 301–320 (GIQA…WSVY).

It belongs to the mitochondrial carrier (TC 2.A.29) family. As to quaternary structure, interacts with ACB10; this interaction stabilizes SLC25A37 and enhances the function of SLC25A37 to import mitochondrial iron during erythroid differentiation.

The protein resides in the mitochondrion inner membrane. The catalysed reaction is Fe(2+)(in) = Fe(2+)(out). In terms of biological role, mitochondrial iron transporter that specifically mediates iron uptake in developing erythroid cells, thereby playing an essential role in heme biosynthesis. This Rattus norvegicus (Rat) protein is Mitoferrin-1 (Slc25a37).